Consider the following 426-residue polypeptide: Transcriptional enhancer factor TEF-1 (426 aa).

Methionine 1 carries the N-acetylmethionine modification. Over residues 1 to 12 the composition is skewed to polar residues; sequence MEPSSWSGSESP. Positions 1–31 are disordered; the sequence is MEPSSWSGSESPAENMERMSDSADKPIDNDA. At serine 11 the chain carries Phosphoserine. Over residues 15 to 28 the composition is skewed to basic and acidic residues; sequence NMERMSDSADKPID. The segment at residues 28–104 is a DNA-binding region (TEA); sequence DNDAEGVWSP…QVLARRKSRD (77 aa). Lysine 108 carries the post-translational modification N6-lactoyllysine. Residues 167-426 form a transcriptional activation region; sequence GSSQDVKPFV…QHHIYRLVKD (260 aa).

Interacts with YAP1 and WWTR1/TAZ. In terms of processing, lactylation by AARS1 promotes nuclear localization and stabilization of YAP1, leading to increased Hippo signaling pathway. Delactylated by SIRT1. As to expression, preferentially expressed in skeletal muscle. Lower levels in pancreas, placenta, and heart.

The protein localises to the nucleus. Its function is as follows. Transcription factor which plays a key role in the Hippo signaling pathway, a pathway involved in organ size control and tumor suppression by restricting proliferation and promoting apoptosis. The core of this pathway is composed of a kinase cascade wherein MST1/MST2, in complex with its regulatory protein SAV1, phosphorylates and activates LATS1/2 in complex with its regulatory protein MOB1, which in turn phosphorylates and inactivates YAP1 oncoprotein and WWTR1/TAZ. Acts by mediating gene expression of YAP1 and WWTR1/TAZ, thereby regulating cell proliferation, migration and epithelial mesenchymal transition (EMT) induction. Binds specifically and cooperatively to the SPH and GT-IIC 'enhansons' (5'-GTGGAATGT-3') and activates transcription in vivo in a cell-specific manner. The activation function appears to be mediated by a limiting cell-specific transcriptional intermediary factor (TIF). Involved in cardiac development. Binds to the M-CAT motif. This Homo sapiens (Human) protein is Transcriptional enhancer factor TEF-1 (TEAD1).